Consider the following 403-residue polypeptide: Ribosomal RNA large subunit methyltransferase I (403 aa).

The region spanning 9 to 86 (YPRLVLSKGR…KAESIDIAFF (78 aa)) is the PUA domain.

Belongs to the methyltransferase superfamily. RlmI family.

The protein resides in the cytoplasm. The enzyme catalyses cytidine(1962) in 23S rRNA + S-adenosyl-L-methionine = 5-methylcytidine(1962) in 23S rRNA + S-adenosyl-L-homocysteine + H(+). Its function is as follows. Specifically methylates the cytosine at position 1962 (m5C1962) of 23S rRNA. The chain is Ribosomal RNA large subunit methyltransferase I from Salmonella gallinarum (strain 287/91 / NCTC 13346).